The following is a 924-amino-acid chain: Ubiquitin carboxyl-terminal hydrolase 5 (924 aa).

The DUSP domain occupies 15–145 (LSPEEERVFI…GPTLARRVIS (131 aa)). Positions 64–83 (TNDGSSLSEHCDSPGSSTLK) are enriched in polar residues. Residues 64–87 (TNDGSSLSEHCDSPGSSTLKKPSR) are disordered. Residues 317–916 (TGLLNLGNTC…AAYVLFYRRK (600 aa)) form the USP domain. The active-site Nucleophile is Cys-326. Residues 648–667 (REESVGKKGNSDSSIPERRS) are compositionally biased toward basic and acidic residues. A disordered region spans residues 648-690 (REESVGKKGNSDSSIPERRSARFNNTEEEDKVGGLKKAKKSNS). The Proton acceptor role is filled by His-874.

This sequence belongs to the peptidase C19 family.

It carries out the reaction Thiol-dependent hydrolysis of ester, thioester, amide, peptide and isopeptide bonds formed by the C-terminal Gly of ubiquitin (a 76-residue protein attached to proteins as an intracellular targeting signal).. In terms of biological role, recognizes and hydrolyzes the peptide bond at the C-terminal Gly of ubiquitin. Involved in the processing of poly-ubiquitin precursors as well as that of ubiquitinated proteins. The sequence is that of Ubiquitin carboxyl-terminal hydrolase 5 (UBP5) from Arabidopsis thaliana (Mouse-ear cress).